Reading from the N-terminus, the 328-residue chain is Cell division protein ZipA (328 aa).

The Periplasmic segment spans residues 1-4 (MDLN). Residues 5-25 (TILIIVGIVALVALIVHGLWS) form a helical membrane-spanning segment. The Cytoplasmic portion of the chain corresponds to 26 to 328 (NRREKSKYFD…NAEQAYLARV (303 aa)). Residues 44–82 (SLTSRSHTQEEMVQPNNISPNTYVENGHTPIPQPTTEKL) form a disordered region. Residues 57–67 (QPNNISPNTYV) show a composition bias toward polar residues.

Belongs to the ZipA family. In terms of assembly, interacts with FtsZ via their C-terminal domains.

The protein resides in the cell inner membrane. Functionally, essential cell division protein that stabilizes the FtsZ protofilaments by cross-linking them and that serves as a cytoplasmic membrane anchor for the Z ring. Also required for the recruitment to the septal ring of downstream cell division proteins. The sequence is that of Cell division protein ZipA from Haemophilus influenzae (strain ATCC 51907 / DSM 11121 / KW20 / Rd).